The primary structure comprises 316 residues: N-acetylmuramic acid 6-phosphate etherase (316 aa).

The tract at residues 1–24 is disordered; that stretch reads MTRFQSDAAVSADRGHLMTEQPNP. In terms of domain architecture, SIS spans 66-229; the sequence is IASRLKDGGR…STAVMVRLGK (164 aa). Glu94 acts as the Proton donor in catalysis. The active site involves Glu125.

Belongs to the GCKR-like family. MurNAc-6-P etherase subfamily. In terms of assembly, homodimer.

The catalysed reaction is N-acetyl-D-muramate 6-phosphate + H2O = N-acetyl-D-glucosamine 6-phosphate + (R)-lactate. The protein operates within amino-sugar metabolism; N-acetylmuramate degradation. Its function is as follows. Specifically catalyzes the cleavage of the D-lactyl ether substituent of MurNAc 6-phosphate, producing GlcNAc 6-phosphate and D-lactate. This is N-acetylmuramic acid 6-phosphate etherase from Parasynechococcus marenigrum (strain WH8102).